Here is an 83-residue protein sequence, read N- to C-terminus: Small ribosomal subunit protein uS17 (83 aa).

Belongs to the universal ribosomal protein uS17 family. In terms of assembly, part of the 30S ribosomal subunit.

In terms of biological role, one of the primary rRNA binding proteins, it binds specifically to the 5'-end of 16S ribosomal RNA. The chain is Small ribosomal subunit protein uS17 from Colwellia psychrerythraea (strain 34H / ATCC BAA-681) (Vibrio psychroerythus).